We begin with the raw amino-acid sequence, 350 residues long: Protein FAM118B (350 aa).

A2 is subject to N-acetylalanine. At S9 the chain carries Phosphoserine. A disordered region spans residues 330 to 350 (AREGQLNGSSAAHGEIRGCST).

This sequence belongs to the FAM118 family.

Its subcellular location is the nucleus. It is found in the cajal body. In terms of biological role, may play a role in Cajal bodies formation. This Rattus norvegicus (Rat) protein is Protein FAM118B (Fam118b).